Here is a 321-residue protein sequence, read N- to C-terminus: NADH-ubiquinone oxidoreductase chain 1 (321 aa).

The next 8 helical transmembrane spans lie at 2-22 (LVML…VAFL), 71-91 (ALFI…WMFI), 104-124 (LLVI…SGWA), 148-168 (LGLI…QAFI), 173-193 (HTWF…STLA), 224-244 (LFFL…AIMF), 255-275 (ILPI…FLWI), and 295-315 (FLPL…SLGG).

The protein belongs to the complex I subunit 1 family.

It localises to the mitochondrion inner membrane. The catalysed reaction is a ubiquinone + NADH + 5 H(+)(in) = a ubiquinol + NAD(+) + 4 H(+)(out). Core subunit of the mitochondrial membrane respiratory chain NADH dehydrogenase (Complex I) that is believed to belong to the minimal assembly required for catalysis. Complex I functions in the transfer of electrons from NADH to the respiratory chain. The immediate electron acceptor for the enzyme is believed to be ubiquinone. The protein is NADH-ubiquinone oxidoreductase chain 1 (MT-ND1) of Lampetra fluviatilis (European river lamprey).